The primary structure comprises 393 residues: Elongation factor Tu (393 aa).

In terms of domain architecture, tr-type G spans 10–203 (KPHVNIGTIG…AVDEFIPEPV (194 aa)). The interval 19–26 (GHVDHGKT) is G1. Residue 19–26 (GHVDHGKT) coordinates GTP. A Mg(2+)-binding site is contributed by threonine 26. The interval 60 to 64 (GITIS) is G2. A G3 region spans residues 81–84 (DCPG). Residues 81–85 (DCPGH) and 136–139 (NKVD) contribute to the GTP site. Positions 136–139 (NKVD) are G4. Residues 173-175 (SAL) form a G5 region.

This sequence belongs to the TRAFAC class translation factor GTPase superfamily. Classic translation factor GTPase family. EF-Tu/EF-1A subfamily. Monomer.

It localises to the cytoplasm. The enzyme catalyses GTP + H2O = GDP + phosphate + H(+). In terms of biological role, GTP hydrolase that promotes the GTP-dependent binding of aminoacyl-tRNA to the A-site of ribosomes during protein biosynthesis. The polypeptide is Elongation factor Tu (Chlorobium limicola (strain DSM 245 / NBRC 103803 / 6330)).